The following is a 596-amino-acid chain: Pumilio homolog 12 (596 aa).

Residues Leu254–Lys596 form the PUM-HD domain. Pumilio repeat units lie at residues Glu277–Asn312, Glu313–His348, Ser349–Ser388, Ala389–Glu424, Ala425–Ser460, Glu461–Glu496, Gln497–Arg532, and Glu533–Asp570.

The protein localises to the cytoplasm. It localises to the nucleus. Sequence-specific RNA-binding protein that regulates translation and mRNA stability by binding the 3'-UTR of target mRNAs. In Arabidopsis thaliana (Mouse-ear cress), this protein is Pumilio homolog 12 (APUM12).